Consider the following 238-residue polypeptide: Probable transcriptional regulatory protein SPD_1725 (238 aa).

The protein belongs to the TACO1 family. YeeN subfamily.

Its subcellular location is the cytoplasm. The polypeptide is Probable transcriptional regulatory protein SPD_1725 (Streptococcus pneumoniae serotype 2 (strain D39 / NCTC 7466)).